We begin with the raw amino-acid sequence, 275 residues long: Acetyl-coenzyme A carboxylase carboxyl transferase subunit beta (275 aa).

The CoA carboxyltransferase N-terminal domain occupies 18–275 (KDNAGPAVPS…IHRLGGEMHA (258 aa)). Residues 23-47 (PAVPSNTHSSKSNGNPVSEMKENKR) are disordered. Polar residues predominate over residues 26 to 38 (PSNTHSSKSNGNP).

It belongs to the AccD/PCCB family. Acetyl-CoA carboxylase is a heterohexamer composed of biotin carboxyl carrier protein (AccB), biotin carboxylase (AccC) and two subunits each of ACCase subunit alpha (AccA) and ACCase subunit beta (AccD).

The protein resides in the cytoplasm. The catalysed reaction is N(6)-carboxybiotinyl-L-lysyl-[protein] + acetyl-CoA = N(6)-biotinyl-L-lysyl-[protein] + malonyl-CoA. It participates in lipid metabolism; malonyl-CoA biosynthesis; malonyl-CoA from acetyl-CoA: step 1/1. Functionally, component of the acetyl coenzyme A carboxylase (ACC) complex. Biotin carboxylase (BC) catalyzes the carboxylation of biotin on its carrier protein (BCCP) and then the CO(2) group is transferred by the transcarboxylase to acetyl-CoA to form malonyl-CoA. This is Acetyl-coenzyme A carboxylase carboxyl transferase subunit beta from Alkaliphilus oremlandii (strain OhILAs) (Clostridium oremlandii (strain OhILAs)).